The chain runs to 830 residues: Prolactin receptor (830 aa).

The N-terminal stretch at 1–23 (MKQKLRSSVQIILLFALTAVGLT) is a signal peptide. Over 24–439 (GQSYPGKPKI…QIPTDFRIKD (416 aa)) the chain is Extracellular. Fibronectin type-III domains follow at residues 30 to 128 (KPKI…VQPD), 129 to 228 (APVN…IPNG), 231 to 331 (PPEK…IVQT), and 333 to 434 (PPVN…IPTD). Residues Cys36 and Cys46 are joined by a disulfide bond. The N-linked (GlcNAc...) asparagine glycan is linked to Asn59. A disulfide bridge links Cys75 with Cys86. Asn91, Asn100, Asn112, Asn132, Asn263, Asn304, Asn316, and Asn336 each carry an N-linked (GlcNAc...) asparagine glycan. Zn(2+) is bound by residues Asp415 and His417. Positions 420–424 (WSEWS) match the WSXWS motif motif. Residues 440–460 (MVVWIIVGVLSSLICLVMSWT) traverse the membrane as a helical segment. The Cytoplasmic segment spans residues 461–830 (MVLKGYRMIA…DPSSFIPAFK (370 aa)). The Box 1 motif motif lies at 472-480 (ILPPVPGPK).

It belongs to the type I cytokine receptor family. Type 1 subfamily.

The protein localises to the membrane. Its function is as follows. This is a receptor for the anterior pituitary hormone prolactin. In Columba livia (Rock dove), this protein is Prolactin receptor (PRLR).